A 455-amino-acid polypeptide reads, in one-letter code: Anaerobic glycerol-3-phosphate dehydrogenase subunit B (455 aa).

Belongs to the anaerobic G-3-P dehydrogenase subunit B family. As to quaternary structure, composed of a catalytic GlpA/B dimer and of membrane bound GlpC. FMN serves as cofactor.

It carries out the reaction a quinone + sn-glycerol 3-phosphate = dihydroxyacetone phosphate + a quinol. Its pathway is polyol metabolism; glycerol degradation via glycerol kinase pathway; glycerone phosphate from sn-glycerol 3-phosphate (anaerobic route): step 1/1. Functionally, conversion of glycerol 3-phosphate to dihydroxyacetone. Uses fumarate or nitrate as electron acceptor. The polypeptide is Anaerobic glycerol-3-phosphate dehydrogenase subunit B (Aliivibrio fischeri (strain ATCC 700601 / ES114) (Vibrio fischeri)).